Reading from the N-terminus, the 500-residue chain is Aldehyde dehydrogenase, mitochondrial (500 aa).

N6-acetyllysine occurs at positions 35, 56, and 142. 245–250 (GSTEVG) serves as a coordination point for NAD(+). The active-site Proton acceptor is the E268. C302 (nucleophile) is an active-site residue. N6-acetyllysine is present on residues K358, K366, K409, K411, K424, and K434.

The protein belongs to the aldehyde dehydrogenase family. Homotetramer. In terms of processing, in response to mitochondrial stress, the precursor protein is ubiquitinated by the SIFI complex in the cytoplasm before mitochondrial import, leading to its degradation. Within the SIFI complex, UBR4 initiates ubiquitin chain that are further elongated or branched by KCMF1.

The protein localises to the mitochondrion matrix. The enzyme catalyses an aldehyde + NAD(+) + H2O = a carboxylate + NADH + 2 H(+). It functions in the pathway alcohol metabolism; ethanol degradation; acetate from ethanol: step 2/2. In terms of biological role, required for clearance of cellular formaldehyde, a cytotoxic and carcinogenic metabolite that induces DNA damage. This is Aldehyde dehydrogenase, mitochondrial (ALDH2) from Equus caballus (Horse).